A 532-amino-acid polypeptide reads, in one-letter code: Protein kinase domain-containing protein ppk9 (532 aa).

The Protein kinase domain occupies 23-274 (WLLGRTLGQG…VAEIMQHPWF (252 aa)). Residues 29–37 (LGQGNLAKV) and K52 contribute to the ATP site. D145 acts as the Proton acceptor in catalysis. A compositionally biased stretch (polar residues) spans 316 to 346 (PSSSVGQIPQPTDHSALSPSKPMSISGTESP). A disordered region spans residues 316-349 (PSSSVGQIPQPTDHSALSPSKPMSISGTESPNPD).

The protein resides in the cytoplasm. The protein localises to the nucleus. Its subcellular location is the cytoskeleton. It is found in the microtubule organizing center. It localises to the spindle pole body. The sequence is that of Protein kinase domain-containing protein ppk9 (ppk9) from Schizosaccharomyces pombe (strain 972 / ATCC 24843) (Fission yeast).